The primary structure comprises 469 residues: Ribulose bisphosphate carboxylase large chain (469 aa).

Lys-5 is subject to N6,N6,N6-trimethyllysine. The substrate site is built by Asn-114 and Thr-164. Catalysis depends on Lys-166, which acts as the Proton acceptor. Lys-168 is a binding site for substrate. Mg(2+) contacts are provided by Lys-192, Asp-194, and Glu-195. Lys-192 bears the N6-carboxylysine mark. His-285 acts as the Proton acceptor in catalysis. Positions 286, 318, and 370 each coordinate substrate.

The protein belongs to the RuBisCO large chain family. Type I subfamily. Heterohexadecamer of 8 large chains and 8 small chains; disulfide-linked. The disulfide link is formed within the large subunit homodimers. Requires Mg(2+) as cofactor. The disulfide bond which can form in the large chain dimeric partners within the hexadecamer appears to be associated with oxidative stress and protein turnover.

It localises to the plastid. It is found in the chloroplast. It catalyses the reaction 2 (2R)-3-phosphoglycerate + 2 H(+) = D-ribulose 1,5-bisphosphate + CO2 + H2O. The catalysed reaction is D-ribulose 1,5-bisphosphate + O2 = 2-phosphoglycolate + (2R)-3-phosphoglycerate + 2 H(+). Functionally, ruBisCO catalyzes two reactions: the carboxylation of D-ribulose 1,5-bisphosphate, the primary event in carbon dioxide fixation, as well as the oxidative fragmentation of the pentose substrate in the photorespiration process. Both reactions occur simultaneously and in competition at the same active site. This chain is Ribulose bisphosphate carboxylase large chain, found in Nicandra physalodes (Apple-of-Peru).